We begin with the raw amino-acid sequence, 121 residues long: MNDIIFLNGMRFYGYHGVLAAENDIGQIFVVDITLKVDLSYAGQSDDVKDTVNYGEVYKDVKSIVEGPRSCLIEHLAERIAKHINSHYNRVMETKVRITKENPPIPGHYDGVGIEIVREND.

Residues E22, Y54, and 73–74 (IE) each bind substrate. K100 (proton donor/acceptor) is an active-site residue.

Belongs to the DHNA family. In terms of assembly, homooctamer. Four molecules assemble into a ring, and two rings come together to give a cylinder with a hole of at least 13 a diameter.

It catalyses the reaction 7,8-dihydroneopterin = 6-hydroxymethyl-7,8-dihydropterin + glycolaldehyde. It carries out the reaction 7,8-dihydroneopterin = 7,8-dihydromonapterin. The protein operates within cofactor biosynthesis; tetrahydrofolate biosynthesis; 2-amino-4-hydroxy-6-hydroxymethyl-7,8-dihydropteridine diphosphate from 7,8-dihydroneopterin triphosphate: step 3/4. Its function is as follows. Catalyzes the conversion of 7,8-dihydroneopterin to 6-hydroxymethyl-7,8-dihydropterin. Can also catalyze the epimerization of carbon 2' of dihydroneopterin to dihydromonapterin. This is Dihydroneopterin aldolase (folB) from Staphylococcus epidermidis (strain ATCC 35984 / DSM 28319 / BCRC 17069 / CCUG 31568 / BM 3577 / RP62A).